Here is a 472-residue protein sequence, read N- to C-terminus: MLKSYQAGVREYRETYWDPHYTPKDSDILAVFKVIPQAGVPREEAAAAVCAESSTATWTTVWTDLLTDLDYYKGRAYAIEDVPGDDEAFYAFVAYPMGLFEEGSIVNVFTSLVGNVFGFKAVRALRLEDVRFPLWFVTTCDGPPHGIQVERDKLDKYGRPMLGCTIKPKLGLSAKNYGRAVYECLRGGLDFTKDDENVNSQPFMRWRDRFEFCQEAIEKAEQETGERKGHYLNVTAPNMEEIYRRAEFAKEIGSPIIMSDYLTIGWAAHSSLSRWCRANGMLLHVHRAMHGVIDRNPRHGINFRVLAKLLRLLGGDHLHSGTVVGKLEGDRAATLGWVDLMRERHVKEDRSRGLFFDQPWGHMAPVMPVASGGIHVWHMPALLAIFGDDAVFQFGGGTLGHPWGNAAGAAANRVALEACVRARNEGRDVEREGKDILTAAAQSSPELKVAMETWREIKFEFDVVDKLDAPHR.

The substrate site is built by N115 and T165. Catalysis depends on K167, which acts as the Proton acceptor. K169 contacts substrate. Residues K193, D195, and E196 each coordinate Mg(2+). K193 is subject to N6-carboxylysine. H286 functions as the Proton acceptor in the catalytic mechanism. Positions 287, 319, and 371 each coordinate substrate.

The protein belongs to the RuBisCO large chain family. Type I subfamily. As to quaternary structure, heterohexadecamer of 8 large chains and 8 small chains. Mg(2+) is required as a cofactor.

It catalyses the reaction 2 (2R)-3-phosphoglycerate + 2 H(+) = D-ribulose 1,5-bisphosphate + CO2 + H2O. The enzyme catalyses D-ribulose 1,5-bisphosphate + O2 = 2-phosphoglycolate + (2R)-3-phosphoglycerate + 2 H(+). Functionally, ruBisCO catalyzes two reactions: the carboxylation of D-ribulose 1,5-bisphosphate, the primary event in carbon dioxide fixation, as well as the oxidative fragmentation of the pentose substrate. Both reactions occur simultaneously and in competition at the same active site. The protein is Ribulose bisphosphate carboxylase large chain 1 of Rhodopseudomonas palustris (strain BisB5).